The primary structure comprises 160 residues: Type IV major fimbrial protein FimA (160 aa).

The propeptide at 1–7 is leader sequence; that stretch reads MKSLQKG. At phenylalanine 8 the chain carries N-methylphenylalanine. Residues 8 to 28 form a helical membrane-spanning segment; that stretch reads FTLIELMIVVAIIGILAAFAI. Cysteine 63 and cysteine 105 are oxidised to a cystine.

This sequence belongs to the N-Me-Phe pilin family. The pili are polar flexible filaments of about 5.4 nanometers diameter and 2.5 micrometers average length; they consist of only a single polypeptide chain arranged in a helical configuration of five subunits per turn in the assembled pilus.

The protein localises to the fimbrium. The protein resides in the membrane. Functionally, major component of the type IV fimbriae that plays an essential role in twitching motility, natural transformation, and protease secretion. In Dichelobacter nodosus (Bacteroides nodosus), this protein is Type IV major fimbrial protein FimA (fimA).